The following is a 96-amino-acid chain: ESAT-6-like protein EsxH (96 aa).

Residues histidine 14, histidine 70, histidine 76, and glutamate 77 each coordinate Zn(2+).

The protein belongs to the WXG100 family. ESAT-6 subfamily. Forms a tight 1:1 complex with EsxG. When it is complexed to EsxG, interacts directly with host HGS/HRS.

It is found in the secreted. Its function is as follows. EsxH, in complex with EsxG, disrupts ESCRT function and impairs host phagosome maturation, thereby promoting intracellular bacterial growth. The complex acts by interacting, via EsxH, with the host hepatocyte growth factor-regulated tyrosine kinase substrate (HGS/HRS), a component of the ESCRT machinery. This chain is ESAT-6-like protein EsxH, found in Mycobacterium tuberculosis (strain ATCC 25618 / H37Rv).